Here is a 283-residue protein sequence, read N- to C-terminus: N-terminal Xaa-Pro-Lys N-methyltransferase 2 (283 aa).

Residues G124, R129, D146, L174–Q175, Q190, and H195 each bind S-adenosyl-L-methionine.

Belongs to the methyltransferase superfamily. NTM1 family.

It localises to the nucleus. The enzyme catalyses N-terminal L-alanyl-L-prolyl-L-lysyl-[protein] + S-adenosyl-L-methionine = N-terminal N-methyl-L-alanyl-L-prolyl-L-lysyl-[protein] + S-adenosyl-L-homocysteine + H(+). It catalyses the reaction N-terminal L-prolyl-L-prolyl-L-lysyl-[protein] + S-adenosyl-L-methionine = N-terminal N-methyl-L-prolyl-L-prolyl-L-lysyl-[protein] + S-adenosyl-L-homocysteine + H(+). It carries out the reaction N-terminal L-seryl-L-prolyl-L-lysyl-[protein] + S-adenosyl-L-methionine = N-terminal N-methyl-L-seryl-L-prolyl-L-lysyl-[protein] + S-adenosyl-L-homocysteine + H(+). In terms of biological role, alpha N-methyltransferase that methylates the N-terminus of target proteins containing the N-terminal motif [Ala/Pro/Ser]-Pro-Lys when the initiator Met is cleaved. Specifically catalyzes monomethylation of exposed alpha-amino group of Ala or Ser residue in the [Ala/Ser]-Pro-Lys motif and Pro in the Pro-Pro-Lys motif. Predominantly functions as a mono-methyltransferase but is also able to di-/tri-methylate the GPKRIA peptide and di-methylate the PPKRIA peptide (in vitro). May activate NTMT1 by priming its substrates for trimethylation. This chain is N-terminal Xaa-Pro-Lys N-methyltransferase 2, found in Homo sapiens (Human).